The following is a 1179-amino-acid chain: Dynein axonemal assembly factor 9 (1179 aa).

Interacts with ARL3.

May act as an effector for ARL3. In Mus musculus (Mouse), this protein is Dynein axonemal assembly factor 9.